Consider the following 598-residue polypeptide: F-box/WD repeat-containing protein 8 (598 aa).

M1 bears the N-acetylmethionine mark. Positions 20 to 97 (SQALRRRRRL…PDRDATEPEP (78 aa)) are disordered. Basic and acidic residues predominate over residues 29-44 (LEAGERRSPRRPEAGA). Residues 51–65 (GYLGLAQGLLEGAGR) show a composition bias toward low complexity. Residues 73–93 (RGGDRKDTSSRSRSPPDRDAT) are compositionally biased toward basic and acidic residues. S84 carries the phosphoserine modification. S86 is modified (phosphoserine; by MTOR). In terms of domain architecture, F-box spans 113–159 (PFFDVRLPYELAINIFQYLNRRELGLCAQVSKTWKVIAEDEVLWYRL). WD repeat units lie at residues 201-250 (AVSE…LESE), 259-299 (QPYV…FEHD), 300-340 (ARIQ…SEFE), 341-383 (VQKL…LHYV), 384-429 (YGQP…SKLG), 430-475 (NALG…SAHQ), 476-513 (LGVSAVQMDDWKVVSGGEEGLVSVWDYRMNQKLWEVHS), and 514-561 (RHPV…AYEF).

Component of the Cul7-RING(FBXW8) complex consisting of CUL7, RBX1, SKP1 and FBXW8; within the complex interacts with CUL7 and SKP1. Interacts with GLMN isoform 1. Interacts with OBSL1, CUL1, CUL2, CCT6B, PFDN5, CCT2, CCT3, CCT6A, CCT7, VBP1, CCDC8, ARF1, TRIP13, PDCD5 and GORASP1. Interacts with MAP4K1/HPK1 (when autophosphorylated). Associated component of the 3M complex. Interacts with POUF51 (when phosphorylated on 'Ser-347'). Phosphorylation at Ser-86 by mTORC2 promotes FBXW8 stabilization, allowing its translocation to the cytosol in response to insulin. In terms of tissue distribution, widely expressed. Expressed at higher level in skeletal muscle, cartilage and lung.

It localises to the cytoplasm. The protein localises to the perinuclear region. Its subcellular location is the golgi apparatus. The protein resides in the cytosol. It functions in the pathway protein modification; protein ubiquitination. In terms of biological role, substrate-recognition component of the Cul7-RING(FBXW8) ubiquitin ligase complex, which mediates the ubiquitination and subsequent proteasomal degradation of target proteins. The Cul7-RING(FBXW8) complex mediates ubiquitination and consequent degradation of GORASP1, acting as a component of the ubiquitin ligase pathway that regulates Golgi morphogenesis and dendrite patterning in brain. Mediates ubiquitination and degradation of IRS1 in a mTOR-dependent manner: the Cul7-RING(FBXW8) complex recognizes and binds IRS1 previously phosphorylated by S6 kinase (RPS6KB1 or RPS6KB2). The Cul7-RING(FBXW8) complex also mediates ubiquitination of MAP4K1/HPK1: recognizes and binds autophosphorylated MAP4K1/HPK1, leading to its degradation, thereby affecting cell proliferation and differentiation. The Cul7-RING(FBXW8) complex also mediates ubiquitination of phosphorylated cyclin-D1 (CCND1). The Cul7-RING(FBXW8) complex is however not a major regulator of CCND1 stability during the G1/S transition. Associated component of the 3M complex, suggesting that it mediates some of 3M complex functions. This chain is F-box/WD repeat-containing protein 8 (Fbxw8), found in Mus musculus (Mouse).